Reading from the N-terminus, the 168-residue chain is DNA damage-inducible transcript 3 protein (168 aa).

Residues 10-18 (LETVSSWEL) are interaction with TRIB3. Residues 10–26 (LETVSSWELEAWYEDLQ) are N-terminal. Residues S14, S15, S30, and S31 each carry the phosphoserine; by CK2 modification. The segment covering 30-43 (SSDENGGPYSSSLG) has biased composition (polar residues). The segment at 30-168 (SSDENGGPYS…DRPHVNLQQV (139 aa)) is disordered. The span at 74–87 (SSSQSPRSPDSSQS) shows a compositional bias: low complexity. Phosphoserine; by MAPK14 occurs at positions 78 and 81. The bZIP domain maps to 98–161 (GRTRKRKQSG…EATRPGSDRP (64 aa)). Residues 101 to 129 (RKRKQSGQCPARGTGKQRMKEKEQENERK) are basic motif. Residues 118–162 (RMKEKEQENERKVAQLAEENERLKQEIERLTREVEATRPGSDRPH) show a composition bias toward basic and acidic residues. A leucine-zipper region spans residues 133-147 (LAEENERLKQEIERL).

It belongs to the bZIP family. Heterodimer. Interacts with TCF7L2/TCF4, EP300/P300, HDAC1, HDAC5 and HDAC6. Interacts with TRIB3 which blocks its association with EP300/P300. Interacts with FOXO3, CEBPB and ATF4. Post-translationally, ubiquitinated, leading to its degradation by the proteasome. Phosphorylation at serine residues by MAPK14 enhances its transcriptional activation activity while phosphorylation at serine residues by CK2 inhibits its transcriptional activation activity.

The protein resides in the cytoplasm. Its subcellular location is the nucleus. Its function is as follows. Multifunctional transcription factor in ER stress response. Plays an essential role in the response to a wide variety of cell stresses and induces cell cycle arrest and apoptosis in response to ER stress. Plays a dual role both as an inhibitor of CCAAT/enhancer-binding protein (C/EBP) function and as an activator of other genes. Acts as a dominant-negative regulator of C/EBP-induced transcription: dimerizes with members of the C/EBP family, impairs their association with C/EBP binding sites in the promoter regions, and inhibits the expression of C/EBP regulated genes. Positively regulates the transcription of TRIB3, IL6, IL8, IL23, TNFRSF10B/DR5, PPP1R15A/GADD34, BBC3/PUMA, BCL2L11/BIM and ERO1L. Negatively regulates; expression of BCL2 and MYOD1, ATF4-dependent transcriptional activation of asparagine synthetase (ASNS), CEBPA-dependent transcriptional activation of hepcidin (HAMP) and CEBPB-mediated expression of peroxisome proliferator-activated receptor gamma (PPARG). Inhibits the canonical Wnt signaling pathway by binding to TCF7L2/TCF4, impairing its DNA-binding properties and repressing its transcriptional activity. Plays a regulatory role in the inflammatory response through the induction of caspase-11 (CASP4/CASP11) which induces the activation of caspase-1 (CASP1) and both these caspases increase the activation of pro-IL1B to mature IL1B which is involved in the inflammatory response. This is DNA damage-inducible transcript 3 protein (DDIT3) from Cricetulus griseus (Chinese hamster).